The chain runs to 287 residues: Putative sugar uptake protein M6_Spy1874 (287 aa).

10 helical membrane passes run I4–G26, L33–V50, T55–G72, V85–V107, F117–S134, F154–F171, S181–F200, Y207–A229, L234–L256, and V268–V285.

This sequence belongs to the GRP transporter (TC 2.A.7.5) family.

The protein localises to the cell membrane. The protein is Putative sugar uptake protein M6_Spy1874 of Streptococcus pyogenes serotype M6 (strain ATCC BAA-946 / MGAS10394).